The chain runs to 123 residues: Ribosome-binding factor A (123 aa).

This sequence belongs to the RbfA family. As to quaternary structure, monomer. Binds 30S ribosomal subunits, but not 50S ribosomal subunits or 70S ribosomes.

It is found in the cytoplasm. Its function is as follows. One of several proteins that assist in the late maturation steps of the functional core of the 30S ribosomal subunit. Associates with free 30S ribosomal subunits (but not with 30S subunits that are part of 70S ribosomes or polysomes). Required for efficient processing of 16S rRNA. May interact with the 5'-terminal helix region of 16S rRNA. This is Ribosome-binding factor A from Chlorobium chlorochromatii (strain CaD3).